We begin with the raw amino-acid sequence, 196 residues long: Bcl-2-like protein 11 (196 aa).

The interval 1–68 (MAKQPSDVNS…PLAPPASPGP (68 aa)) is disordered. The segment covering 34–43 (TSLQTESQGN) has biased composition (polar residues). The residue at position 65 (Ser-65) is a Phosphoserine; by MAPK. 3 positions are modified to phosphoserine: Ser-73, Ser-83, and Ser-90. The segment at 90 to 114 (SGYFSFDTDRSPAPMSCDKSTQTPS) is disordered. Residues 146 to 160 (IAQELRRIGDEFNET) carry the BH3 motif.

Belongs to the Bcl-2 family. As to quaternary structure, forms heterodimers with a number of antiapoptotic Bcl-2 proteins, including MCL1, BCL2, BCL2L1 isoform Bcl-X(L), BCL2A1/BFL-1, and BCL2L2/BCLW. Does not heterodimerize with proapoptotic proteins such as BAD, BOK or BAK. Identified in a complex containing BCL2L11, DYNLL1 and BCL2L1 isoform Bcl-X(L); BH3 integrity is required for BCL2L1-binding. Interacts with YWHAZ. When phosphorylated, interacts with TRIM2; this interaction is associated with ubiquitination and degradation. Interacts (via BH3) with MCL1; this interaction may sequester BCL2L11 and prevent its pro-apoptotic activity. When phosphorylated, isoform BimEL interacts with USP27X; this interaction leads to BCL2L11 deubiquitination and stabilization. Interacts with GIMAP5. Interacts with BCL2L10/BCL-B. Phosphorylation at Ser-65 by MAPK1/MAPK3 leads interaction with TRIM2 and ubiquitination, followed by proteasomal degradation. Deubiquitination catalyzed by USP27X stabilizes the protein. In terms of processing, ubiquitination by TRIM2 following phosphorylation by MAPK1/MAPK3 leads to proteasomal degradation. Conversely, deubiquitination catalyzed by USP27X stabilizes the protein. In terms of tissue distribution, widely expressed.

It is found in the membrane. The protein resides in the mitochondrion. Functionally, induces apoptosis and anoikis. The chain is Bcl-2-like protein 11 (Bcl2l11) from Rattus norvegicus (Rat).